The primary structure comprises 137 residues: Ribosome-binding factor A (137 aa).

This sequence belongs to the RbfA family. In terms of assembly, monomer. Binds 30S ribosomal subunits, but not 50S ribosomal subunits or 70S ribosomes.

It is found in the cytoplasm. In terms of biological role, one of several proteins that assist in the late maturation steps of the functional core of the 30S ribosomal subunit. Associates with free 30S ribosomal subunits (but not with 30S subunits that are part of 70S ribosomes or polysomes). Required for efficient processing of 16S rRNA. May interact with the 5'-terminal helix region of 16S rRNA. The chain is Ribosome-binding factor A from Nitrobacter winogradskyi (strain ATCC 25391 / DSM 10237 / CIP 104748 / NCIMB 11846 / Nb-255).